A 55-amino-acid polypeptide reads, in one-letter code: Large ribosomal subunit protein bL33 (55 aa).

This sequence belongs to the bacterial ribosomal protein bL33 family.

This chain is Large ribosomal subunit protein bL33, found in Arthrobacter sp. (strain FB24).